The primary structure comprises 239 residues: Ribonuclease PH (239 aa).

Phosphate contacts are provided by residues R86 and 124 to 126 (GTR).

This sequence belongs to the RNase PH family. As to quaternary structure, homohexameric ring arranged as a trimer of dimers.

It catalyses the reaction tRNA(n+1) + phosphate = tRNA(n) + a ribonucleoside 5'-diphosphate. Its function is as follows. Phosphorolytic 3'-5' exoribonuclease that plays an important role in tRNA 3'-end maturation. Removes nucleotide residues following the 3'-CCA terminus of tRNAs; can also add nucleotides to the ends of RNA molecules by using nucleoside diphosphates as substrates, but this may not be physiologically important. Probably plays a role in initiation of 16S rRNA degradation (leading to ribosome degradation) during starvation. The sequence is that of Ribonuclease PH from Aromatoleum aromaticum (strain DSM 19018 / LMG 30748 / EbN1) (Azoarcus sp. (strain EbN1)).